A 580-amino-acid chain; its full sequence is MAILKDTIIRYANARYATASGTSTATAASVSAASCPNLPLLLQKRRAIASAKSKNPNLVKRELQAHHSAISEYNNDQLDHYFRLSHTERPLYNLTNFNSQPQVNPKMRFLIFDFIMYCHTRLNLSTSTLFLTFTILDKYSSRFIIKSYNYQLLSLTALWISSKFWDSKNRMATLKVLQNLCCNQYSIKQFTTMEMHLFKSLDWSICQSATFDSYIDIFLFQSTSPLSPGVVLSAPLEAFIQQKLALLNNAAGTAINKSSSSQGPSLNINEIKLGAIMLCELASFNLELSFKYDRSLIALGAINLIKLSLNYYNSNLWENINLALEENCQDLDIKLSEISNTLLDIAMDQNSFPSSFKSKYLNSNKTSLAKSLLDALQNYCIQLKLEEFYRSQELETMYNTIFAQSFDSDSLTCVYSNATTPKSATVSSAATDYFSDHTHLRRLTKDSISPPFAFTPTSSSSSPSPFNSPYKTSSSMTTPDSASHHSHSGSFSSTQNSFKRSLSIPQNSSIFWPSPLTPTTPSLMSNRKLLQNLSVRSKRLFPVRPMATAHPCSAPTQLKKRSTSSVDCDFNDSSNLKKTR.

The segment covering 454 to 469 (FTPTSSSSSPSPFNSP) has biased composition (low complexity). Disordered regions lie at residues 454–498 (FTPT…QNSF) and 546–580 (MATAHPCSAPTQLKKRSTSSVDCDFNDSSNLKKTR). Polar residues-rich tracts occupy residues 470–480 (YKTSSSMTTPD) and 563–580 (TSSVDCDFNDSSNLKKTR).

This sequence belongs to the cyclin family.

Its function is as follows. Essential for the control of the cell cycle at the G1/S (start) transition. CLN3 may be an upstream activator of the G1 cyclins which directly catalyze start. This chain is G1/S-specific cyclin CLN3 (CLN3), found in Saccharomyces cerevisiae (strain ATCC 204508 / S288c) (Baker's yeast).